A 51-amino-acid chain; its full sequence is Structural protein ORF5a (51 aa).

Residues 11 to 28 (RGLLLAIAFFVVYRAVLF) traverse the membrane as a helical segment.

It belongs to the arteriviridae ORF5a protein family. Interacts with GP2b and GP4.

The protein resides in the virion. Its subcellular location is the host cell membrane. Its function is as follows. Minor virion component that plays an essential role in virus infectivity. The protein is Structural protein ORF5a of Porcine reproductive and respiratory syndrome virus (strain VR-2332) (PRRSV).